Reading from the N-terminus, the 294-residue chain is Pantothenate synthetase 3 (294 aa).

31-38 contributes to the ATP binding site; the sequence is MGALHEGH. His38 (proton donor) is an active-site residue. A (R)-pantoate-binding site is contributed by Gln62. Gln62 contacts beta-alanine. Residue 154 to 157 coordinates ATP; that stretch reads GEKD. Gln160 contacts (R)-pantoate. 191–194 is an ATP binding site; that stretch reads LSSR.

This sequence belongs to the pantothenate synthetase family. Homodimer.

It is found in the cytoplasm. It catalyses the reaction (R)-pantoate + beta-alanine + ATP = (R)-pantothenate + AMP + diphosphate + H(+). The protein operates within cofactor biosynthesis; (R)-pantothenate biosynthesis; (R)-pantothenate from (R)-pantoate and beta-alanine: step 1/1. In terms of biological role, catalyzes the condensation of pantoate with beta-alanine in an ATP-dependent reaction via a pantoyl-adenylate intermediate. The sequence is that of Pantothenate synthetase 3 from Frankia alni (strain DSM 45986 / CECT 9034 / ACN14a).